A 606-amino-acid polypeptide reads, in one-letter code: NADH-ubiquinone oxidoreductase chain 5 (606 aa).

Transmembrane regions (helical) follow at residues 1–21, 43–63, 87–107, 117–137, 140–160, 171–191, 201–221, 241–261, 273–293, 310–330, 365–385, 409–429, 457–477, 488–508, and 582–602; these read MNMFSSCMITALVILTLPIIM, AFMISMIPTMMFIYSGQETIF, MIFVPVALFVTWSIMEFSMWY, FFKYLLLFLITMMVLVTANNM, LFIGWEGVGIMSFLLIGWWYG, AVLYNRIGDVGFIMTMAWFLL, IFITTNDNFNLPLLGLLLAAT, TPVSALLHSSTMVVAGVFLLI, IQTLTLCLGAITTLFTAICAL, LGLMMVTIGINQPYLAFLHIC, VLPFTTTSLIIGSLALTGMPF, LLITLVATSLTAAYSTRIMFF, LLIGSVFAGYIISHSITPTTI, MTALAVTILGFILALELNLTT, and GLIKLYFLSFMLTMILSLLIL.

This sequence belongs to the complex I subunit 5 family. Core subunit of respiratory chain NADH dehydrogenase (Complex I) which is composed of 45 different subunits.

It is found in the mitochondrion inner membrane. The catalysed reaction is a ubiquinone + NADH + 5 H(+)(in) = a ubiquinol + NAD(+) + 4 H(+)(out). Core subunit of the mitochondrial membrane respiratory chain NADH dehydrogenase (Complex I) which catalyzes electron transfer from NADH through the respiratory chain, using ubiquinone as an electron acceptor. Essential for the catalytic activity and assembly of complex I. The chain is NADH-ubiquinone oxidoreductase chain 5 (MT-ND5) from Canis lupus familiaris (Dog).